We begin with the raw amino-acid sequence, 266 residues long: Ras-like protein family member 12 (266 aa).

GTP contacts are provided by residues Gly-27 to Ser-34, Asp-74 to Leu-78, and Asn-134 to Asp-137.

The protein belongs to the small GTPase superfamily. Ras family.

It carries out the reaction GTP + H2O = GDP + phosphate + H(+). The chain is Ras-like protein family member 12 (RASL12) from Homo sapiens (Human).